The chain runs to 334 residues: Leucine carboxyl methyltransferase 1 (334 aa).

S-adenosyl-L-methionine is bound by residues Lys-37, Arg-73, Gly-98, Asp-122, 171-172, and Glu-198; that span reads DL.

This sequence belongs to the methyltransferase superfamily. LCMT family.

It catalyses the reaction [phosphatase 2A protein]-C-terminal L-leucine + S-adenosyl-L-methionine = [phosphatase 2A protein]-C-terminal L-leucine methyl ester + S-adenosyl-L-homocysteine. Its function is as follows. Methylates the carboxyl group of the C-terminal leucine residue of protein phosphatase 2A catalytic subunits to form alpha-leucine ester residues. This is Leucine carboxyl methyltransferase 1 (LCMT1) from Homo sapiens (Human).